Consider the following 177-residue polypeptide: DELTA-stichotoxin-Hcr4b (177 aa).

The tract at residues A3–A12 is plays an important role in the hemolytic activity. The N-terminal region stretch occupies residues G11–S30. Residues S54, V87, S105, P107, Y133, Y137, and Y138 each coordinate phosphocholine. Residues S105–K120 are trp-rich region, which is important for the binding to lipid membrane.

This sequence belongs to the actinoporin family. Sea anemone subfamily. Octamer or nonamer in membranes. Monomer in the soluble state.

The protein resides in the secreted. It is found in the nematocyst. Its subcellular location is the target cell membrane. Functionally, pore-forming protein that forms cations-selective hydrophilic pores of around 1 nm and causes cardiac stimulation and cytolysis. Pore formation is a multi-step process that involves specific recognition of membrane sphingomyelin (but neither cholesterol nor phosphatidylcholine) using aromatic rich region and adjacent phosphocholine (POC) binding site, firm binding to the membrane (mainly driven by hydrophobic interactions) accompanied by the transfer of the N-terminal region to the lipid-water interface and finally pore formation after oligomerization of monomers. Cytolytic effects include red blood cells hemolysis, platelet aggregation and lysis, cytotoxic and cytostatic effects on fibroblasts. Lethality in mammals has been ascribed to severe vasospasm of coronary vessels, cardiac arrhythmia, and inotropic effects. Preincubation with exogenous sphingomyeline causes complete loss of hemolytic activity. In Radianthus crispa (Leathery sea anemone), this protein is DELTA-stichotoxin-Hcr4b.